We begin with the raw amino-acid sequence, 384 residues long: MTMLNFTYYNPVRLIYGKGSLDEIEKQHLIPEDARIMMTYGGGSIKKNGVYEEVLKHIKPIVEFGGIEPNPSHETCIKAIKIAKENKINFLVAVGGGSIIDATKYIALGMEHTYSDDPYDICLKGGKFKVNPAQAKIGVVLTIPATGSETNCWGVISRHADKLKLPFNNESVFPTWSIVDPCFTMSLPDNQIRNGLVDSFVHCIEQYIGNYHLNPVVEAETEGVMRTIIGVSHKTLENHQDYQARITFCYAATVALNMSLLCGVTLCGGAHAVGHELTSYYGLAHGETLAITTPGVMRFNKEKNAKKLIQMGEQVFGIKNSTPEAAIEATEKWFKSIGMKTRLSEWGKGKEEFETIARKFEGNPAGAHKDIDYKGCLQILNDIY.

Belongs to the iron-containing alcohol dehydrogenase family.

It catalyses the reaction a primary alcohol + NADP(+) = an aldehyde + NADPH + H(+). Its function is as follows. Has NADP-dependent alcohol dehydrogenase activity. This Entamoeba histolytica (strain ATCC 30459 / HM-1:IMSS / ABRM) protein is NADP-dependent alcohol dehydrogenase 3.